Here is a 1517-residue protein sequence, read N- to C-terminus: Neurite extension and migration factor (1517 aa).

The span at aspartate 381 to glutamate 405 shows a compositional bias: basic and acidic residues. Disordered regions lie at residues aspartate 381 to glycine 416, valine 505 to arginine 529, serine 644 to glycine 697, lysine 732 to glutamate 775, arginine 1065 to serine 1084, aspartate 1161 to lysine 1228, and alanine 1372 to aspartate 1422. Residues serine 644 to alanine 663 are compositionally biased toward polar residues. The span at serine 678–alanine 687 shows a compositional bias: low complexity. A compositionally biased stretch (polar residues) spans threonine 764–methionine 773.

It localises to the nucleus. The protein localises to the cytoplasm. In terms of biological role, involved in neurite outgrowth by regulating cell-cell adhesion via the N-cadherin signaling pathway. May act by regulating expression of protein-coding genes, such as N-cadherins and integrin beta-1 (ITGB1). This is Neurite extension and migration factor from Rattus norvegicus (Rat).